The chain runs to 837 residues: Protein translocase subunit SecA (837 aa).

ATP contacts are provided by residues Q83, 101–105, and D494; that span reads GEGKT.

Belongs to the SecA family. Monomer and homodimer. Part of the essential Sec protein translocation apparatus which comprises SecA, SecYEG and auxiliary proteins SecDF. Other proteins may also be involved.

It localises to the cell membrane. Its subcellular location is the cytoplasm. The catalysed reaction is ATP + H2O + cellular proteinSide 1 = ADP + phosphate + cellular proteinSide 2.. Its function is as follows. Part of the Sec protein translocase complex. Interacts with the SecYEG preprotein conducting channel. Has a central role in coupling the hydrolysis of ATP to the transfer of proteins into and across the cell membrane, serving as an ATP-driven molecular motor driving the stepwise translocation of polypeptide chains across the membrane. The chain is Protein translocase subunit SecA from Ureaplasma parvum serovar 3 (strain ATCC 27815 / 27 / NCTC 11736).